Consider the following 308-residue polypeptide: Glutaminase (308 aa).

Residues Ser65, Asn116, Glu161, Asn168, Tyr192, Tyr244, and Val262 each coordinate substrate.

Belongs to the glutaminase family. As to quaternary structure, homotetramer.

It catalyses the reaction L-glutamine + H2O = L-glutamate + NH4(+). In Geobacillus kaustophilus (strain HTA426), this protein is Glutaminase.